The following is a 432-amino-acid chain: Bifunctional protein GlmU (432 aa).

A pyrophosphorylase region spans residues 1–223 (MGKKSIIILA…EENFKGVNSK (223 aa)). Residues 9–12 (LAAG), Lys23, Gln75, and 82–83 (GT) contribute to the UDP-N-acetyl-alpha-D-glucosamine site. Asp103 contributes to the Mg(2+) binding site. Residues Gly135, Glu149, Asn164, and Asn221 each contribute to the UDP-N-acetyl-alpha-D-glucosamine site. Asn221 is a Mg(2+) binding site. The tract at residues 224 to 244 (VELADAEVIHQNRIKKEFMKA) is linker. The segment at 245 to 432 (GVIMRLPDTI…FYKHFSSKKK (188 aa)) is N-acetyltransferase. Residues Arg308 and Lys325 each coordinate UDP-N-acetyl-alpha-D-glucosamine. His336 acts as the Proton acceptor in catalysis. 2 residues coordinate UDP-N-acetyl-alpha-D-glucosamine: Tyr339 and Asn350. Acetyl-CoA contacts are provided by residues 359–360 (NY), Ser378, Ala396, and Arg413.

In the N-terminal section; belongs to the N-acetylglucosamine-1-phosphate uridyltransferase family. The protein in the C-terminal section; belongs to the transferase hexapeptide repeat family. In terms of assembly, homotrimer. It depends on Mg(2+) as a cofactor.

Its subcellular location is the cytoplasm. The catalysed reaction is alpha-D-glucosamine 1-phosphate + acetyl-CoA = N-acetyl-alpha-D-glucosamine 1-phosphate + CoA + H(+). The enzyme catalyses N-acetyl-alpha-D-glucosamine 1-phosphate + UTP + H(+) = UDP-N-acetyl-alpha-D-glucosamine + diphosphate. The protein operates within nucleotide-sugar biosynthesis; UDP-N-acetyl-alpha-D-glucosamine biosynthesis; N-acetyl-alpha-D-glucosamine 1-phosphate from alpha-D-glucosamine 6-phosphate (route II): step 2/2. Its pathway is nucleotide-sugar biosynthesis; UDP-N-acetyl-alpha-D-glucosamine biosynthesis; UDP-N-acetyl-alpha-D-glucosamine from N-acetyl-alpha-D-glucosamine 1-phosphate: step 1/1. It functions in the pathway bacterial outer membrane biogenesis; LPS lipid A biosynthesis. Catalyzes the last two sequential reactions in the de novo biosynthetic pathway for UDP-N-acetylglucosamine (UDP-GlcNAc). The C-terminal domain catalyzes the transfer of acetyl group from acetyl coenzyme A to glucosamine-1-phosphate (GlcN-1-P) to produce N-acetylglucosamine-1-phosphate (GlcNAc-1-P), which is converted into UDP-GlcNAc by the transfer of uridine 5-monophosphate (from uridine 5-triphosphate), a reaction catalyzed by the N-terminal domain. The chain is Bifunctional protein GlmU from Aliarcobacter butzleri (strain RM4018) (Arcobacter butzleri).